A 274-amino-acid chain; its full sequence is Remorin 4.2 (274 aa).

The segment covering 1 to 30 (MLTLYHQERSPDATSNDRDETPETVVREVH) has biased composition (basic and acidic residues). Disordered regions lie at residues 1–71 (MLTL…EGEN), 117–157 (TDHE…TVQR), and 218–245 (AMEK…AKRG). Polar residues-rich tracts occupy residues 61-71 (RSATTMSEGEN) and 145-156 (GPGQSRVGSTVQ). Residues 204 to 239 (MKKIERKLEERKAKAMEKTQNNVAKAQRKAEERRAT) are a coiled coil. Positions 231–245 (RKAEERRATAEAKRG) are enriched in basic and acidic residues.

Belongs to the remorin family. Forms homodimer and heterodimer with REM4.1. Interacts with KIN11. Probably ubiquitinated and degraded by the 26S proteasome pathway. Predominantly detected in bud, stem, root, flower, silique, and leaves, and enhanced dramatically in senescence leaf.

Its subcellular location is the cell membrane. Functionally, collaborates with REM4.1 to positively regulate the BCTV and BSCTV susceptibility. The polypeptide is Remorin 4.2 (Arabidopsis thaliana (Mouse-ear cress)).